A 356-amino-acid polypeptide reads, in one-letter code: Probable dual-specificity RNA methyltransferase RlmN (356 aa).

The Proton acceptor role is filled by Glu-100. The 235-residue stretch at 106–340 (TNSRLTTCVS…VSLRASRGLD (235 aa)) folds into the Radical SAM core domain. Cys-113 and Cys-345 form a disulfide bridge. [4Fe-4S] cluster contacts are provided by Cys-120, Cys-124, and Cys-127. S-adenosyl-L-methionine is bound by residues 167–168 (GE), Ser-197, 226–228 (SLH), and Asn-302. Cys-345 functions as the S-methylcysteine intermediate in the catalytic mechanism.

Belongs to the radical SAM superfamily. RlmN family. It depends on [4Fe-4S] cluster as a cofactor.

The protein resides in the cytoplasm. The enzyme catalyses adenosine(2503) in 23S rRNA + 2 reduced [2Fe-2S]-[ferredoxin] + 2 S-adenosyl-L-methionine = 2-methyladenosine(2503) in 23S rRNA + 5'-deoxyadenosine + L-methionine + 2 oxidized [2Fe-2S]-[ferredoxin] + S-adenosyl-L-homocysteine. It catalyses the reaction adenosine(37) in tRNA + 2 reduced [2Fe-2S]-[ferredoxin] + 2 S-adenosyl-L-methionine = 2-methyladenosine(37) in tRNA + 5'-deoxyadenosine + L-methionine + 2 oxidized [2Fe-2S]-[ferredoxin] + S-adenosyl-L-homocysteine. Specifically methylates position 2 of adenine 2503 in 23S rRNA and position 2 of adenine 37 in tRNAs. The protein is Probable dual-specificity RNA methyltransferase RlmN of Prochlorococcus marinus (strain MIT 9211).